Reading from the N-terminus, the 485-residue chain is Glutamate--tRNA ligase 2 (485 aa).

The 'HIGH' region motif lies at P10 to N20. A 'KMSKS' region motif is present at residues K252 to R256. K255 lines the ATP pocket.

The protein belongs to the class-I aminoacyl-tRNA synthetase family. Glutamate--tRNA ligase type 1 subfamily. As to quaternary structure, monomer.

The protein localises to the cytoplasm. It catalyses the reaction tRNA(Glu) + L-glutamate + ATP = L-glutamyl-tRNA(Glu) + AMP + diphosphate. Catalyzes the attachment of glutamate to tRNA(Glu) in a two-step reaction: glutamate is first activated by ATP to form Glu-AMP and then transferred to the acceptor end of tRNA(Glu). The sequence is that of Glutamate--tRNA ligase 2 from Caldanaerobacter subterraneus subsp. tengcongensis (strain DSM 15242 / JCM 11007 / NBRC 100824 / MB4) (Thermoanaerobacter tengcongensis).